The chain runs to 212 residues: Uridine kinase (212 aa).

13–20 (GGSGSGKT) serves as a coordination point for ATP.

This sequence belongs to the uridine kinase family.

It localises to the cytoplasm. The enzyme catalyses uridine + ATP = UMP + ADP + H(+). It catalyses the reaction cytidine + ATP = CMP + ADP + H(+). It participates in pyrimidine metabolism; CTP biosynthesis via salvage pathway; CTP from cytidine: step 1/3. Its pathway is pyrimidine metabolism; UMP biosynthesis via salvage pathway; UMP from uridine: step 1/1. This is Uridine kinase from Bacillus thuringiensis (strain Al Hakam).